The primary structure comprises 335 residues: MIRVGINGYGTIGKRVADAVAAQPDMTVAGVAKTSPNFEATQARKRGFDLYTAVEDRADQFPAAGIETAGPVDDLIADSDVVVDATPSGVGAENRSRYAAHDTPAIYQGGEDASVADVSFNARANFEAAADADHVRVVSCNTTGLSRLLAPLREQYGIEKVRATLVRRGGDPGQTDRGPINDILPDPITIPSHHGPDVNTIFPDLDIDTLGMKVPATLMHMHSINVTLERDPDAADVRDVLAGQSRIMLLDDDLGIDGTGPLKEYAQDMGRPRGDLWENCLWGESVTMDGRDFYCFQAIHQESDVVPENVDAVRAIAGDADAAESIATTNDALGI.

NAD(+)-binding positions include 11–12 and Gly-110; that span reads TI. 139–141 is a binding site for D-glyceraldehyde 3-phosphate; it reads SCN. Cys-140 acts as the Nucleophile in catalysis. An NAD(+)-binding site is contributed by Arg-168. Residue 194 to 195 coordinates D-glyceraldehyde 3-phosphate; that stretch reads HG. Gln-301 lines the NAD(+) pocket.

The protein belongs to the glyceraldehyde-3-phosphate dehydrogenase family. Homotetramer.

Its subcellular location is the cytoplasm. It catalyses the reaction D-glyceraldehyde 3-phosphate + phosphate + NADP(+) = (2R)-3-phospho-glyceroyl phosphate + NADPH + H(+). It carries out the reaction D-glyceraldehyde 3-phosphate + phosphate + NAD(+) = (2R)-3-phospho-glyceroyl phosphate + NADH + H(+). The protein operates within carbohydrate degradation; glycolysis; pyruvate from D-glyceraldehyde 3-phosphate: step 1/5. The protein is Glyceraldehyde-3-phosphate dehydrogenase of Halobacterium salinarum (strain ATCC 29341 / DSM 671 / R1).